A 351-amino-acid polypeptide reads, in one-letter code: Pentatricopeptide repeat-containing protein At3g56030, mitochondrial (351 aa).

A mitochondrion-targeting transit peptide spans 1-41; it reads MFRLKPLISVDLNQTMSLLRRFVKEANNSRFLLQSISGRSF. PPR repeat units follow at residues 124–158, 159–193, 194–224, and 232–266; these read RKHS…EFGL, STCV…AIPV, DVTS…MEEE, and DTRT…GLSV.

Belongs to the PPR family. P subfamily.

It localises to the mitochondrion. In Arabidopsis thaliana (Mouse-ear cress), this protein is Pentatricopeptide repeat-containing protein At3g56030, mitochondrial.